Consider the following 499-residue polypeptide: MSKLEALQVFLLEKLNEKNEIPNTSHLEFDGKKLGPQEAQSAILSLAAKNMIEFSRHEIEIYNLTAEGENICANGSHEAKVYNEICASMSGLNIGELKKKLGNSAGIGQGRAFKLGWIKKDGDKLVKNTDSITDETPKVLSEIKEHGTISDSKTLTDLKKRKLVERNKIMYFSLRKGPNFSLQIEKLNTDLTAEMITSRSWESAKFKSYNFAAEGIPPAGGCLHPLMKVREEFRKFFFELGFEEMPTNNFVESGFWNFDALFVPQQHSARDAQDTFFLKVPASTDKLPDPEYVARVKATHENGGETKGIGYRAPFSLEETRKLVLRTHTTAVSANMLYKLAQNGFHPAKYFSIDRVFRNETVDATHLAEFHQVEGVICDRNITLGDLIGFLEVFFGKMNVKNLRFKPAYNPYTEPSLEVFSYHEKLGKWVEVGNSGMFRPEMLEPMGLPKDVRCLGFGLSLERPTMIKYGVADIRQLIGPKVNLDLIEASPAVRLDKEE.

Residues T330, 372-374, and Y412 each bind L-phenylalanine; that span reads QVE. Position 414 (E414) interacts with Mg(2+). An L-phenylalanine-binding site is contributed by F438.

The protein belongs to the class-II aminoacyl-tRNA synthetase family. Phe-tRNA synthetase alpha subunit type 2 subfamily. Tetramer of two alpha and two beta subunits. Requires Mg(2+) as cofactor.

The protein localises to the cytoplasm. The enzyme catalyses tRNA(Phe) + L-phenylalanine + ATP = L-phenylalanyl-tRNA(Phe) + AMP + diphosphate + H(+). This is Phenylalanine--tRNA ligase alpha subunit (frs2) from Schizosaccharomyces pombe (strain 972 / ATCC 24843) (Fission yeast).